A 580-amino-acid chain; its full sequence is Tricyclene synthase TPS4, chloroplastic (580 aa).

Residues 1–41 (MLLNSSFISLPSFFKSQELGRTNLLIHRNGSPLLCYATNTN) constitute a chloroplast transit peptide. Positions 296, 334, 338, 475, and 478 each coordinate (2E)-geranyl diphosphate. Residues Asp-334 and Asp-338 each contribute to the Mg(2+) site. The short motif at 334–338 (DDIYD) is the DDXXD motif element. Mg(2+)-binding residues include Asn-478, Thr-482, and Glu-486.

It belongs to the terpene synthase family. Tpsb subfamily. Mg(2+) serves as cofactor. Requires Mn(2+) as cofactor. Expressed in leaves.

It is found in the plastid. It localises to the chloroplast stroma. It carries out the reaction (2E)-geranyl diphosphate = tricyclene + diphosphate. It catalyses the reaction (2E)-geranyl diphosphate = (E)-beta-ocimene + diphosphate. Its pathway is secondary metabolite biosynthesis; terpenoid biosynthesis. Functionally, promotes the emission of terpenes volatile organic compounds (VOC) in response to damage mediated by arthropod herbivores (e.g. Spodoptera exigua), probably to attract natural enemies of the herbivores. The protein is Tricyclene synthase TPS4, chloroplastic (TPS4) of Medicago truncatula (Barrel medic).